The following is a 656-amino-acid chain: Threonine--tRNA ligase (656 aa).

The 64-residue stretch at 1-64 (MAEAASLTFP…ERSGKIEIIT (64 aa)) folds into the TGS domain. A catalytic region spans residues 246 to 548 (DHRRLGREMD…LIENYAGHFP (303 aa)). Residues C342, H393, and H525 each contribute to the Zn(2+) site.

The protein belongs to the class-II aminoacyl-tRNA synthetase family. Homodimer. Requires Zn(2+) as cofactor.

The protein resides in the cytoplasm. The enzyme catalyses tRNA(Thr) + L-threonine + ATP = L-threonyl-tRNA(Thr) + AMP + diphosphate + H(+). Its function is as follows. Catalyzes the attachment of threonine to tRNA(Thr) in a two-step reaction: L-threonine is first activated by ATP to form Thr-AMP and then transferred to the acceptor end of tRNA(Thr). Also edits incorrectly charged L-seryl-tRNA(Thr). This is Threonine--tRNA ligase from Chelativorans sp. (strain BNC1).